Consider the following 577-residue polypeptide: Moesin (577 aa).

Positions 2–295 (PKTINVRVTT…GNHELYMRRR (294 aa)) constitute an FERM domain. S74 bears the Phosphoserine mark. K79 bears the N6-acetyllysine mark. K83 bears the N6-succinyllysine mark. A [IL]-x-C-x-x-[DE] motif motif is present at residues 115-120 (IYCPPE). Y116 is subject to Phosphotyrosine. C117 is subject to S-nitrosocysteine. N6-acetyllysine occurs at positions 139 and 165. Residues 376 to 414 (EQERKRAQSEAEKLAKERQEAEEAKEALLKASRDQKKTQ) show a composition bias toward basic and acidic residues. 2 disordered regions span residues 376 to 415 (EQER…KTQE) and 434 to 518 (ARQK…NERV). At S407 the chain carries Phosphoserine. The span at 476–487 (AENDQDEQDENG) shows a compositional bias: acidic residues. Residues 492 to 518 (ADLRADAMAKDRSEEERTTEAEKNERV) show a composition bias toward basic and acidic residues. The residue at position 527 (S527) is a Phosphoserine. Phosphothreonine; by ROCK2 and STK10 is present on T558.

As to quaternary structure, binds NHERF1. In resting T-cells, part of a PAG1-NHERF1-MSN complex which is disrupted upon TCR activation. Interacts with PPP1R16B. Interacts with PDZD8. Interacts with SELPLG and SYK; mediates the activation of SYK by SELPLG. Interacts with PDPN (via cytoplasmic domain); activates RHOA and promotes epithelial-mesenchymal transition. Interacts with SPN/CD43 cytoplasmic tail, CD44 and ICAM2. Phosphorylation on Thr-558 is crucial for the formation of microvilli-like structures. Phosphorylation by ROCK2 suppresses the head-to-tail association of the N-terminal and C-terminal halves resulting in an opened conformation which is capable of actin and membrane-binding. Phosphorylation on Thr-558 by STK10 negatively regulates lymphocyte migration and polarization. In terms of processing, S-nitrosylation of Cys-117 is induced by interferon-gamma and oxidatively-modified low-densitity lipoprotein (LDL(ox)) implicating the iNOS-S100A8/9 transnitrosylase complex.

It is found in the cell membrane. The protein resides in the cytoplasm. It localises to the cytoskeleton. The protein localises to the apical cell membrane. Its subcellular location is the cell projection. It is found in the microvillus membrane. The protein resides in the microvillus. Its activity is regulated as follows. A head-to-tail association, of the N-terminal and C-terminal halves results in a closed conformation (inactive form) which is incapable of actin or membrane-binding. In terms of biological role, probably involved in connections of major cytoskeletal structures to the plasma membrane. Plays a role in regulating the proliferation, migration, and adhesion of human lymphoid cells and participates in immunologic synapse formation. The sequence is that of Moesin from Sus scrofa (Pig).